The chain runs to 380 residues: Alcohol dehydrogenase 1 (380 aa).

The Zn(2+) site is built by Cys-48, Thr-50, His-70, Cys-100, Cys-103, Cys-106, Cys-114, and Cys-178. An alcohol contacts are provided by Thr-50 and His-70. Residue Thr-50 coordinates NAD(+). Residues 203-208, Asp-227, Arg-232, Thr-273, Val-296, 296-298, and Arg-373 each bind NAD(+); these read GLGAVG and VGV.

This sequence belongs to the zinc-containing alcohol dehydrogenase family. In terms of assembly, homodimer. Zn(2+) is required as a cofactor.

The protein resides in the cytoplasm. The catalysed reaction is a primary alcohol + NAD(+) = an aldehyde + NADH + H(+). It carries out the reaction a secondary alcohol + NAD(+) = a ketone + NADH + H(+). In Pisum sativum (Garden pea), this protein is Alcohol dehydrogenase 1.